Consider the following 369-residue polypeptide: 3-dehydroquinate synthase (369 aa).

Residues 75-80 (DGEEHK), 109-113 (GVIGD), 133-134 (TT), K146, K155, and 173-176 (TLKT) each bind NAD(+). E188, H251, and H268 together coordinate Zn(2+).

The protein belongs to the sugar phosphate cyclases superfamily. Dehydroquinate synthase family. The cofactor is Co(2+). Requires Zn(2+) as cofactor. NAD(+) serves as cofactor.

The protein resides in the cytoplasm. The catalysed reaction is 7-phospho-2-dehydro-3-deoxy-D-arabino-heptonate = 3-dehydroquinate + phosphate. Its pathway is metabolic intermediate biosynthesis; chorismate biosynthesis; chorismate from D-erythrose 4-phosphate and phosphoenolpyruvate: step 2/7. Its function is as follows. Catalyzes the conversion of 3-deoxy-D-arabino-heptulosonate 7-phosphate (DAHP) to dehydroquinate (DHQ). The chain is 3-dehydroquinate synthase from Legionella pneumophila (strain Lens).